Here is a 398-residue protein sequence, read N- to C-terminus: S-adenosylmethionine synthase (398 aa).

His16 is a binding site for ATP. Asp18 contributes to the Mg(2+) binding site. Glu51 lines the K(+) pocket. Glu64 and Gln108 together coordinate L-methionine. Residues 108-118 (QSADIAQGVDA) are flexible loop. ATP-binding positions include 176 to 178 (DSK), 242 to 243 (KF), Asp251, 257 to 258 (RK), Ala274, and Lys278. Asp251 lines the L-methionine pocket. Lys282 serves as a coordination point for L-methionine.

The protein belongs to the AdoMet synthase family. Homotetramer; dimer of dimers. Requires Mg(2+) as cofactor. The cofactor is K(+).

It localises to the cytoplasm. The enzyme catalyses L-methionine + ATP + H2O = S-adenosyl-L-methionine + phosphate + diphosphate. The protein operates within amino-acid biosynthesis; S-adenosyl-L-methionine biosynthesis; S-adenosyl-L-methionine from L-methionine: step 1/1. Its function is as follows. Catalyzes the formation of S-adenosylmethionine (AdoMet) from methionine and ATP. The overall synthetic reaction is composed of two sequential steps, AdoMet formation and the subsequent tripolyphosphate hydrolysis which occurs prior to release of AdoMet from the enzyme. The sequence is that of S-adenosylmethionine synthase from Rhodopseudomonas palustris (strain HaA2).